We begin with the raw amino-acid sequence, 273 residues long: Glutamate racemase (273 aa).

Residues Asp-9–Ser-10 and Tyr-41–Gly-42 each bind substrate. The Proton donor/acceptor role is filled by Cys-73. Residue Asn-74–Thr-75 participates in substrate binding. The Proton donor/acceptor role is filled by Cys-183. Thr-184–His-185 contributes to the substrate binding site.

This sequence belongs to the aspartate/glutamate racemases family.

It carries out the reaction L-glutamate = D-glutamate. Its pathway is cell wall biogenesis; peptidoglycan biosynthesis. In terms of biological role, provides the (R)-glutamate required for cell wall biosynthesis. The polypeptide is Glutamate racemase (Shewanella oneidensis (strain ATCC 700550 / JCM 31522 / CIP 106686 / LMG 19005 / NCIMB 14063 / MR-1)).